Here is a 697-residue protein sequence, read N- to C-terminus: Potassium-transporting ATPase ATP-binding subunit (697 aa).

The next 4 helical transmembrane spans lie at 55–75 (PIMFVVEIGFIITFILSFLPS), 79–99 (SIPGWFNITVSLILLFTVLFA), 245–265 (LTLIFLIVVVTLPIFTNYLGF), and 271–291 (VLVALLVCLIPTTIGGLLSAI). The 4-aspartylphosphate intermediate role is filled by Asp-324. Residues Asp-361, Glu-365, 393–400 (FKAETRMS), and Lys-412 contribute to the ATP site. The Mg(2+) site is built by Asp-535 and Asp-539. 3 consecutive transmembrane segments (helical) span residues 605–625 (FAIIPAMFTLAIPQMEALNIM), 633–653 (AILSALIFNAVIIPLLIPLAM), and 677–697 (GGVIVPFIGIKVIDIIVGLFI).

The protein belongs to the cation transport ATPase (P-type) (TC 3.A.3) family. Type IA subfamily. The system is composed of three essential subunits: KdpA, KdpB and KdpC.

The protein localises to the cell membrane. The enzyme catalyses K(+)(out) + ATP + H2O = K(+)(in) + ADP + phosphate + H(+). Part of the high-affinity ATP-driven potassium transport (or Kdp) system, which catalyzes the hydrolysis of ATP coupled with the electrogenic transport of potassium into the cytoplasm. This subunit is responsible for energy coupling to the transport system and for the release of the potassium ions to the cytoplasm. The chain is Potassium-transporting ATPase ATP-binding subunit from Bacillus cereus (strain ATCC 14579 / DSM 31 / CCUG 7414 / JCM 2152 / NBRC 15305 / NCIMB 9373 / NCTC 2599 / NRRL B-3711).